The sequence spans 332 residues: Putative D-threonate 4-phosphate dehydrogenase (332 aa).

Substrate contacts are provided by His-138 and Thr-139. Positions 168, 211, and 266 each coordinate a divalent metal cation. Lys-274 and Arg-292 together coordinate substrate.

It belongs to the PdxA family. PdxA2 subfamily. As to quaternary structure, homodimer. A divalent metal cation is required as a cofactor.

It carries out the reaction 4-O-phospho-D-threonate + NAD(+) = dihydroxyacetone phosphate + CO2 + NADH. In terms of biological role, catalyzes the NAD-dependent oxidation and subsequent decarboxylation of D-threonate 4-phosphate to produce dihydroxyacetone phosphate (DHAP). The polypeptide is Putative D-threonate 4-phosphate dehydrogenase (Fusobacterium nucleatum subsp. nucleatum (strain ATCC 25586 / DSM 15643 / BCRC 10681 / CIP 101130 / JCM 8532 / KCTC 2640 / LMG 13131 / VPI 4355)).